Consider the following 399-residue polypeptide: Rho GTPase-activating protein gacC (399 aa).

A compositionally biased stretch (basic and acidic residues) spans 1–13 (MESKDQNVYRKGS). The tract at residues 1 to 80 (MESKDQNVYR…SSSTSTTPVK (80 aa)) is disordered. A compositionally biased stretch (polar residues) spans 14–31 (DNFSKGSNTFFGNLKSIS). The segment covering 61 to 79 (SVDSSSSNPSSSSTSTTPV) has biased composition (low complexity). The 190-residue stretch at 186–375 (VELEESFKTA…NLISFFQQIF (190 aa)) folds into the Rho-GAP domain.

The protein resides in the cytoplasm. Its function is as follows. Rho GTPase-activating protein involved in the signal transduction pathway. This chain is Rho GTPase-activating protein gacC (gacC), found in Dictyostelium discoideum (Social amoeba).